The primary structure comprises 402 residues: Serine/threonine transporter SstT (402 aa).

8 helical membrane-spanning segments follow: residues 17-37 (IAIG…ITVI), 44-64 (FVGG…ANAL), 78-98 (IIVL…ISHY), 138-158 (ALSQ…GFAM), 179-199 (IVRW…FDTI), 212-232 (VLIL…NPII), 295-315 (MAGA…TLGI), and 336-356 (ASGI…LFGI).

Belongs to the dicarboxylate/amino acid:cation symporter (DAACS) (TC 2.A.23) family.

Its subcellular location is the cell membrane. The enzyme catalyses L-serine(in) + Na(+)(in) = L-serine(out) + Na(+)(out). It carries out the reaction L-threonine(in) + Na(+)(in) = L-threonine(out) + Na(+)(out). In terms of biological role, involved in the import of serine and threonine into the cell, with the concomitant import of sodium (symport system). This chain is Serine/threonine transporter SstT, found in Streptococcus thermophilus (strain ATCC BAA-250 / LMG 18311).